A 645-amino-acid chain; its full sequence is ATP-dependent zinc metalloprotease FtsH (645 aa).

Residues 1–8 (MDFNREHK) are Cytoplasmic-facing. Residues 9-29 (INFLYVLAAMVGVLLIQSLVS) form a helical membrane-spanning segment. Residues 30–105 (QPDHIRTIPY…FSGEPEPGPW (76 aa)) are Periplasmic-facing. The helical transmembrane segment at 106–126 (PTILGWLMPIVGFALVWMFLI) threads the bilayer. The Cytoplasmic portion of the chain corresponds to 127–645 (RPMSMGPGMD…ALTVEGGEAQ (519 aa)). An ATP-binding site is contributed by 199–206 (GPPGTGKT). His423 serves as a coordination point for Zn(2+). Residue Glu424 is part of the active site. His427 and Asp500 together coordinate Zn(2+). Residues 612-645 (SASVLRDGGDGAADAGQDRSGEHRALTVEGGEAQ) are disordered. Residues 627 to 637 (GQDRSGEHRAL) show a composition bias toward basic and acidic residues.

It in the central section; belongs to the AAA ATPase family. In the C-terminal section; belongs to the peptidase M41 family. As to quaternary structure, homohexamer. The cofactor is Zn(2+).

It localises to the cell inner membrane. In terms of biological role, acts as a processive, ATP-dependent zinc metallopeptidase for both cytoplasmic and membrane proteins. Plays a role in the quality control of integral membrane proteins. The protein is ATP-dependent zinc metalloprotease FtsH of Paraburkholderia phymatum (strain DSM 17167 / CIP 108236 / LMG 21445 / STM815) (Burkholderia phymatum).